We begin with the raw amino-acid sequence, 230 residues long: Protein FAM3A (230 aa).

A signal peptide spans 1-33 (MRLAGPLRIVALIIIMGLTWILVTILLGGPGVG). 2 disulfides stabilise this stretch: Cys-59-Cys-87 and Cys-65-Cys-222. One can recognise a GG-type lectin domain in the interval 68–226 (EHLSFRIVSG…LEMEGCIPRR (159 aa)).

This sequence belongs to the FAM3 family.

Its subcellular location is the secreted. This is Protein FAM3A (Fam3a) from Mus musculus (Mouse).